A 401-amino-acid chain; its full sequence is Glutamyl-tRNA reductase (401 aa).

Substrate contacts are provided by residues 45-48 (TCNR), serine 101, 106-108 (EDQ), and glutamine 112. Cysteine 46 serves as the catalytic Nucleophile. 177 to 182 (GYGEVG) is a binding site for NADP(+).

The protein belongs to the glutamyl-tRNA reductase family. As to quaternary structure, homodimer.

The enzyme catalyses (S)-4-amino-5-oxopentanoate + tRNA(Glu) + NADP(+) = L-glutamyl-tRNA(Glu) + NADPH + H(+). Its pathway is porphyrin-containing compound metabolism; protoporphyrin-IX biosynthesis; 5-aminolevulinate from L-glutamyl-tRNA(Glu): step 1/2. Functionally, catalyzes the NADPH-dependent reduction of glutamyl-tRNA(Glu) to glutamate 1-semialdehyde (GSA). In Clostridium beijerinckii (strain ATCC 51743 / NCIMB 8052) (Clostridium acetobutylicum), this protein is Glutamyl-tRNA reductase.